A 206-amino-acid polypeptide reads, in one-letter code: Large ribosomal subunit protein uL4 (206 aa).

A disordered region spans residues 43–94 (ARSGNRAQKDREQVKHTTKKPWRQKGTGRARAGMSSSPLWRGGGRIFPNSPE). Over residues 58 to 70 (HTTKKPWRQKGTG) the composition is skewed to basic residues.

This sequence belongs to the universal ribosomal protein uL4 family. As to quaternary structure, part of the 50S ribosomal subunit.

Functionally, one of the primary rRNA binding proteins, this protein initially binds near the 5'-end of the 23S rRNA. It is important during the early stages of 50S assembly. It makes multiple contacts with different domains of the 23S rRNA in the assembled 50S subunit and ribosome. Forms part of the polypeptide exit tunnel. The protein is Large ribosomal subunit protein uL4 of Polynucleobacter asymbioticus (strain DSM 18221 / CIP 109841 / QLW-P1DMWA-1) (Polynucleobacter necessarius subsp. asymbioticus).